We begin with the raw amino-acid sequence, 140 residues long: MLDITEIKKIIPHRYPMLLIDRVEELIPGEKAVAKRNVTINEELFNGHFPGNPVMPGVLIVEALAQTGAVALLSLPEFKGKTAYFGGIKSAKFRKVVRPGDSLRLEVTLEKIRNNVGLGKAIATVDGKKACTAELTFMIG.

Residue His48 is part of the active site.

Belongs to the thioester dehydratase family. FabZ subfamily.

The protein resides in the cytoplasm. It catalyses the reaction a (3R)-hydroxyacyl-[ACP] = a (2E)-enoyl-[ACP] + H2O. Involved in unsaturated fatty acids biosynthesis. Catalyzes the dehydration of short chain beta-hydroxyacyl-ACPs and long chain saturated and unsaturated beta-hydroxyacyl-ACPs. In Ligilactobacillus salivarius (strain UCC118) (Lactobacillus salivarius), this protein is 3-hydroxyacyl-[acyl-carrier-protein] dehydratase FabZ.